The chain runs to 270 residues: Phosphonoacetaldehyde hydrolase (270 aa).

Asp-11 (nucleophile) is an active-site residue. Residues Asp-11 and Ala-13 each coordinate Mg(2+). Lys-53 serves as the catalytic Schiff-base intermediate with substrate. Residue Asp-187 participates in Mg(2+) binding.

This sequence belongs to the HAD-like hydrolase superfamily. PhnX family. As to quaternary structure, homodimer. It depends on Mg(2+) as a cofactor.

The enzyme catalyses phosphonoacetaldehyde + H2O = acetaldehyde + phosphate + H(+). Functionally, involved in phosphonate degradation. The polypeptide is Phosphonoacetaldehyde hydrolase (Salmonella enteritidis PT4 (strain P125109)).